A 217-amino-acid chain; its full sequence is Peptide methionine sulfoxide reductase MsrA 1 (217 aa).

Residue Cys54 is part of the active site.

This sequence belongs to the MsrA Met sulfoxide reductase family.

It carries out the reaction L-methionyl-[protein] + [thioredoxin]-disulfide + H2O = L-methionyl-(S)-S-oxide-[protein] + [thioredoxin]-dithiol. It catalyses the reaction [thioredoxin]-disulfide + L-methionine + H2O = L-methionine (S)-S-oxide + [thioredoxin]-dithiol. Has an important function as a repair enzyme for proteins that have been inactivated by oxidation. Catalyzes the reversible oxidation-reduction of methionine sulfoxide in proteins to methionine. The sequence is that of Peptide methionine sulfoxide reductase MsrA 1 (msrA1) from Caulobacter vibrioides (strain ATCC 19089 / CIP 103742 / CB 15) (Caulobacter crescentus).